The chain runs to 542 residues: CTP synthase (542 aa).

Positions 1–265 (MARYVFITGG…DSEVLCAFGI (265 aa)) are amidoligase domain. Ser-13 contributes to the CTP binding site. Ser-13 is a UTP binding site. 14–19 (SLGKGI) lines the ATP pocket. L-glutamine is bound at residue Tyr-54. Asp-71 is an ATP binding site. Residues Asp-71 and Glu-139 each coordinate Mg(2+). Residues 146–148 (DIE), 186–191 (KTKPTQ), and Lys-222 each bind CTP. Residues 186–191 (KTKPTQ) and Lys-222 contribute to the UTP site. The Glutamine amidotransferase type-1 domain maps to 291-541 (TIAVVGKYTG…IEAAVEQSRL (251 aa)). Ala-353 is an L-glutamine binding site. Cys-380 (nucleophile; for glutamine hydrolysis) is an active-site residue. L-glutamine-binding positions include 381 to 384 (FGMQ), Glu-404, and Arg-469. Catalysis depends on residues His-514 and Glu-516.

It belongs to the CTP synthase family. In terms of assembly, homotetramer.

It catalyses the reaction UTP + L-glutamine + ATP + H2O = CTP + L-glutamate + ADP + phosphate + 2 H(+). The enzyme catalyses L-glutamine + H2O = L-glutamate + NH4(+). The catalysed reaction is UTP + NH4(+) + ATP = CTP + ADP + phosphate + 2 H(+). It participates in pyrimidine metabolism; CTP biosynthesis via de novo pathway; CTP from UDP: step 2/2. Allosterically activated by GTP, when glutamine is the substrate; GTP has no effect on the reaction when ammonia is the substrate. The allosteric effector GTP functions by stabilizing the protein conformation that binds the tetrahedral intermediate(s) formed during glutamine hydrolysis. Inhibited by the product CTP, via allosteric rather than competitive inhibition. Functionally, catalyzes the ATP-dependent amination of UTP to CTP with either L-glutamine or ammonia as the source of nitrogen. Regulates intracellular CTP levels through interactions with the four ribonucleotide triphosphates. This chain is CTP synthase, found in Bartonella tribocorum (strain CIP 105476 / IBS 506).